The chain runs to 854 residues: Aryl hydrocarbon receptor (854 aa).

Residues 1 to 9 constitute a propeptide that is removed on maturation; that stretch reads MSSGANITY. Residues 1 to 38 are disordered; that stretch reads MSSGANITYASRKRRKPVQKTVKPIPAEGIKSNPSKRH. Short sequence motifs (nuclear localization signal) lie at residues 12 to 15 and 36 to 41; these read RKRR and KRHRDR. In terms of domain architecture, bHLH spans 26-79; it reads PAEGIKSNPSKRHRDRLNTELDRLASLLPFPQDVINKLDKLSVLRLSVSYLRAK. The interval 37 to 65 is DNA-binding; it reads RHRDRLNTELDRLASLLPFPQDVINKLDK. Required for maintaining the overall integrity of the AHR:ARNT heterodimer and its transcriptional activity stretches follow at residues 49 to 81, 116 to 124, and 264 to 266; these read LASLLPFPQDVINKLDKLSVLRLSVSYLRAKSF, LLQALNGFV, and FAI. Residues 63–71 carry the Nuclear export signal motif; sequence LDKLSVLRL. Residues 111–175 form the PAS 1 domain; it reads QEGEFLLQAL…AEFQRQLHWA (65 aa). The 71-residue stretch at 270–340 folds into the PAS 2 domain; that stretch reads LQPPSILEIR…CAESHIRMIK (71 aa). Residues 346–387 enclose the PAC domain; sequence MTVFRLLAKHSRWRWVQSNARLIYRNGRPDYIIATQRPLTDE. Residues 425–452 form a disordered region; sequence LPIRTKSNTSRKDWAPQSTPSKDSFHPS. The span at 440-452 shows a compositional bias: polar residues; that stretch reads PQSTPSKDSFHPS.

In terms of assembly, homodimer. Heterodimer; efficient DNA binding requires dimerization with another bHLH protein. Interacts with ARNT; the heterodimer ARNT:AHR binds to core DNA sequence 5'-TGCGTG-3' within the dioxin response element (DRE) of target gene promoters and activates their transcription. Binds MYBBP1A. Interacts with coactivators including SRC-1, RIP140 and NOCA7, and with the corepressor SMRT. Interacts with NEDD8 and IVNS1ABP. Interacts with BMAL1. Interacts with HSP90AB1. Interacts with TIPARP; leading to mono-ADP-ribosylation of AHR and subsequent inhibition of AHR. Post-translationally, mono-ADP-ribosylated, leading to inhibit transcription activator activity of AHR.

Its subcellular location is the cytoplasm. It is found in the nucleus. Its function is as follows. Ligand-activated transcription factor that enables cells to adapt to changing conditions by sensing compounds from the environment, diet, microbiome and cellular metabolism, and which plays important roles in development, immunity and cancer. Upon ligand binding, translocates into the nucleus, where it heterodimerizes with ARNT and induces transcription by binding to xenobiotic response elements (XRE). Regulates a variety of biological processes, including angiogenesis, hematopoiesis, drug and lipid metabolism, cell motility and immune modulation. Xenobiotics can act as ligands: upon xenobiotic-binding, activates the expression of multiple phase I and II xenobiotic chemical metabolizing enzyme genes (such as the CYP1A1 gene). Mediates biochemical and toxic effects of halogenated aromatic hydrocarbons. Next to xenobiotics, natural ligands derived from plants, microbiota, and endogenous metabolism are potent AHR agonists. Tryptophan (Trp) derivatives constitute an important class of endogenous AHR ligands. Acts as a negative regulator of anti-tumor immunity: indoles and kynurenic acid generated by Trp catabolism act as ligand and activate AHR, thereby promoting AHR-driven cancer cell motility and suppressing adaptive immunity. Regulates the circadian clock by inhibiting the basal and circadian expression of the core circadian component PER1. Inhibits PER1 by repressing the CLOCK-BMAL1 heterodimer mediated transcriptional activation of PER1. The heterodimer ARNT:AHR binds to core DNA sequence 5'-TGCGTG-3' within the dioxin response element (DRE) of target gene promoters and activates their transcription. This is Aryl hydrocarbon receptor (Ahr) from Mus spretus (Western Mediterranean mouse).